Here is a 301-residue protein sequence, read N- to C-terminus: Homeobox protein Nkx-2.6 (301 aa).

The tract at residues E22–P135 is disordered. The segment at residues R132–R191 is a DNA-binding region (homeobox).

It belongs to the NK-2 homeobox family.

Its subcellular location is the nucleus. Acts as a transcriptional activator. In conjunction with NKX2-5, may play a role in both pharyngeal and cardiac embryonic development. This Homo sapiens (Human) protein is Homeobox protein Nkx-2.6 (NKX2-6).